The sequence spans 410 residues: Peptidase T (410 aa).

His-77 contributes to the Zn(2+) binding site. The active site involves Asp-79. Asp-140 contacts Zn(2+). Glu-174 functions as the Proton acceptor in the catalytic mechanism. 3 residues coordinate Zn(2+): Glu-175, Asp-197, and His-379.

This sequence belongs to the peptidase M20B family. The cofactor is Zn(2+).

It localises to the cytoplasm. It catalyses the reaction Release of the N-terminal residue from a tripeptide.. In terms of biological role, cleaves the N-terminal amino acid of tripeptides. This chain is Peptidase T, found in Desulfitobacterium hafniense (strain DSM 10664 / DCB-2).